Here is a 135-residue protein sequence, read N- to C-terminus: Ig heavy chain V region XIG14 (135 aa).

The first 18 residues, 1 to 18, serve as a signal peptide directing secretion; that stretch reads DFIIFFIFMFFSPSCILS. Residues 20 to 128 form the Ig-like domain; sequence TLQESGPGTV…GYNFDYWGQG (109 aa).

This is Ig heavy chain V region XIG14 from Xenopus laevis (African clawed frog).